The following is a 113-amino-acid chain: Protein FPV195 (113 aa).

This sequence belongs to the poxviruses A31 family.

This Vertebrata (FPV) protein is Protein FPV195.